The chain runs to 129 residues: Histone H2A.J (129 aa).

The interval 1-22 (MSGRGKQGGKVRAKAKSRSSRA) is disordered. N6-acetyllysine is present on residues K6 and K10. A compositionally biased stretch (basic residues) spans 7-19 (QGGKVRAKAKSRS). K10 carries the N6-lactoyllysine; alternate modification. N5-methylglutamine is present on Q105. T121 bears the Phosphothreonine; by DCAF1 mark.

The protein belongs to the histone H2A family. The nucleosome is a histone octamer containing two molecules each of H2A, H2B, H3 and H4 assembled in one H3-H4 heterotetramer and two H2A-H2B heterodimers. The octamer wraps approximately 147 bp of DNA. Post-translationally, glutamine methylation at Gln-105 (H2AQ104me) by FBL is specifically dedicated to polymerase I. It is present at 35S ribosomal DNA locus and impairs binding of the FACT complex. Monoubiquitination of Lys-120 (H2AXK119ub) gives a specific tag for epigenetic transcriptional repression. Following DNA double-strand breaks (DSBs), it is ubiquitinated through 'Lys-63' linkage of ubiquitin moieties. In terms of processing, phosphorylation on Ser-2 (H2AS1ph) is enhanced during mitosis. Phosphorylation on Ser-2 by RPS6KA5/MSK1 directly represses transcription. Acetylation of H3 inhibits Ser-2 phosphorylation by RPS6KA5/MSK1. Phosphorylation at Thr-121 (H2AT120ph) by DCAF1 is present in the regulatory region of many tumor suppresor genes and down-regulates their transcription.

It localises to the nucleus. The protein resides in the chromosome. Its function is as follows. Core component of nucleosome. Nucleosomes wrap and compact DNA into chromatin, limiting DNA accessibility to the cellular machineries which require DNA as a template. Histones thereby play a central role in transcription regulation, DNA repair, DNA replication and chromosomal stability. DNA accessibility is regulated via a complex set of post-translational modifications of histones, also called histone code, and nucleosome remodeling. This Bos taurus (Bovine) protein is Histone H2A.J.